A 166-amino-acid polypeptide reads, in one-letter code: Ribosome maturation factor RimM (166 aa).

The PRC barrel domain maps to 90–163 (EGQYFIKDII…KIVIKAVEEW (74 aa)).

The protein belongs to the RimM family. As to quaternary structure, binds ribosomal protein uS19.

The protein resides in the cytoplasm. Its function is as follows. An accessory protein needed during the final step in the assembly of 30S ribosomal subunit, possibly for assembly of the head region. Essential for efficient processing of 16S rRNA. May be needed both before and after RbfA during the maturation of 16S rRNA. It has affinity for free ribosomal 30S subunits but not for 70S ribosomes. The sequence is that of Ribosome maturation factor RimM from Clostridium acetobutylicum (strain ATCC 824 / DSM 792 / JCM 1419 / IAM 19013 / LMG 5710 / NBRC 13948 / NRRL B-527 / VKM B-1787 / 2291 / W).